The sequence spans 398 residues: Enoyl-[acyl-carrier-protein] reductase [NADH] (398 aa).

Residues 48–53 (GSSTGY), 74–75 (FE), 111–112 (DA), and 139–140 (LA) each bind NAD(+). Residue Tyr225 participates in substrate binding. The active-site Proton donor is the Tyr235. NAD(+) is bound by residues Lys244 and 273-275 (VVT).

Belongs to the TER reductase family. In terms of assembly, monomer.

The catalysed reaction is a 2,3-saturated acyl-[ACP] + NAD(+) = a (2E)-enoyl-[ACP] + NADH + H(+). It participates in lipid metabolism; fatty acid biosynthesis. Its function is as follows. Involved in the final reduction of the elongation cycle of fatty acid synthesis (FAS II). Catalyzes the reduction of a carbon-carbon double bond in an enoyl moiety that is covalently linked to an acyl carrier protein (ACP). The polypeptide is Enoyl-[acyl-carrier-protein] reductase [NADH] (Pseudomonas aeruginosa (strain UCBPP-PA14)).